Consider the following 362-residue polypeptide: GTPase Obg (362 aa).

An Obg domain is found at 1–159 (MKFLDEAKVY…KTIWLRLKLI (159 aa)). Positions 160-327 (ADAGLVGLPN…VLRALRDVIV (168 aa)) constitute an OBG-type G domain. GTP-binding positions include 166–173 (GLPNAGKS), 191–195 (FTTLH), 212–215 (DIPG), 279–282 (SQID), and 308–310 (SAV). Mg(2+) contacts are provided by Ser173 and Thr193. The tract at residues 332-362 (EEKPAKVPKLRHRDMIVSDEGEGEDGADDQP) is disordered. Positions 348-362 (VSDEGEGEDGADDQP) are enriched in acidic residues.

The protein belongs to the TRAFAC class OBG-HflX-like GTPase superfamily. OBG GTPase family. As to quaternary structure, monomer. Mg(2+) is required as a cofactor.

Its subcellular location is the cytoplasm. Functionally, an essential GTPase which binds GTP, GDP and possibly (p)ppGpp with moderate affinity, with high nucleotide exchange rates and a fairly low GTP hydrolysis rate. Plays a role in control of the cell cycle, stress response, ribosome biogenesis and in those bacteria that undergo differentiation, in morphogenesis control. The chain is GTPase Obg from Rhizobium etli (strain CIAT 652).